Consider the following 243-residue polypeptide: Phomoidride biosynthesis cluster protein B (243 aa).

This sequence belongs to the tstB family.

Functionally, phosphatidylethanolamine-binding protein; part of the gene cluster that mediates the biosynthesis of the antihypercholesterolemic agents phomoidrides which are dimeric anhydrides. Within the pathway, tstB is not essential for dimerization and its function has still to be determined. The pathway begins with the highly reducing polyketide synthase tstA that catalyzes the formation of a C12-fatty acyl-ACP, starting from one acetate and 5 malonate units. The hydrolase tstM is involved in the release of the C12-fatty acyl chain from phiA. The alkylcitrate synthase (ACS) tstJ and the alkylcitrate dehydratase (ACDH) tstI then give rise to decarboxylated monomeric anhydrides by coupling the C12-fatty acyl chain with oxalacetic acid. The cyclase tstC is responsible for the dimerization of the monomeric anhydrides which leads to the production of prephomoidride that contains the characteristic bicyclo[4.3.1]deca-1,6-diene system of phomoidrides. Iterative oxidation catalyzed by the alpha-ketoglutarate-dependent dioxygenase tstK produced then phomoidride A. Finally, the methyltransferase tstE converts phomoidride A to phomoidride B via an acetalization reaction. The phosphatidylethanolamine-binding protein tstB and tstN are not essential for dimerization and their functions have still to be determined. In Talaromyces stipitatus (strain ATCC 10500 / CBS 375.48 / QM 6759 / NRRL 1006) (Penicillium stipitatum), this protein is Phomoidride biosynthesis cluster protein B.